Here is a 323-residue protein sequence, read N- to C-terminus: MDPKGQRVKLNDGHFIPVLGFGTFAPREVPKSEALEVTKFAIEAGFRHIDSAHLYQNEEQVGQAIRSKIADGTVKREDIFYTSKLWSTSLRPELVRPALEKSLNNLQLDYVDLYIIHFPVALKPGETLFPTDENGKPIFDSVDLCRTWEALEKCKDAGLTKSIGVSNFNHKQLEKILNKPGLKYKPVCNQVECHPYFNQSKLLDFCKSHDIVLVAYGALGSQRLKEWVNPNLPFLLEDPVLSAIAKKHRQTPALVALRYQIQRGVVVLAKSYNKKRIKENIQVFDFELTPEDMKAIDGLNSNMRYNELLLGVGHPEYPFVEEY.

NADP(+) is bound by residues 20-24 and Asp-50; that span reads GFGTF. Catalysis depends on Tyr-55, which acts as the Proton donor. Substrate is bound at residue His-117. Residues 166 to 167, Gln-190, 216 to 221, and 270 to 280 each bind NADP(+); these read SN, YGALGS, and KSYNKKRIKEN.

This sequence belongs to the aldo/keto reductase family.

It is found in the cytoplasm. The chain is Dihydrodiol dehydrogenase 3 from Bos taurus (Bovine).